A 142-amino-acid polypeptide reads, in one-letter code: MAAKTVQLDIVSAENSIFHGQVSFLEVNGAEGELGIMPNHVALLTKIKPGMARFIKQDGSEEVLYLSGGLLEVQPTAISVLADVALRADDIDEKAALEAKERAEQAIANAGTDFNYEAATIELAKSLAQLRVVECIKKNITR.

Belongs to the ATPase epsilon chain family. F-type ATPases have 2 components, CF(1) - the catalytic core - and CF(0) - the membrane proton channel. CF(1) has five subunits: alpha(3), beta(3), gamma(1), delta(1), epsilon(1). CF(0) has three main subunits: a, b and c.

Its subcellular location is the cell inner membrane. Functionally, produces ATP from ADP in the presence of a proton gradient across the membrane. This chain is ATP synthase epsilon chain, found in Shewanella frigidimarina (strain NCIMB 400).